Consider the following 1483-residue polypeptide: Heme-responsive zinc finger transcription factor HAP1 (1483 aa).

Polar residues predominate over residues Met1–Ser50. A disordered region spans residues Met1–Lys56. Zn(2+)-binding residues include Cys64, Cys67, Cys74, Cys81, Cys84, and Cys93. A DNA-binding region (zn(2)-C6 fungal-type) is located at residues Cys64–Cys93. A coiled-coil region spans residues Glu105–Ser134. Polar residues predominate over residues Val162–His176. The tract at residues Val162–Asn208 is disordered. The span at Gln177 to Asn208 shows a compositional bias: low complexity. The heme-responsive; required for HMC formation stretch occupies residues Lys244–Ser444. HRM repeat units lie at residues Lys280–His285, Lys299–His304, Lys323–His328, Arg347–His352, Lys389–His394, and Arg415–His420. Polar residues-rich tracts occupy residues Ser432–His447 and Gln706–Leu734. Disordered regions lie at residues Ser432 to His458 and Gln706 to Gln767. Residues Asn735–Asn759 are compositionally biased toward low complexity. Residues Lys1192–Gln1197 form an HRM 7 repeat. Disordered regions lie at residues Asp1266–Leu1289 and Asn1386–Ser1411. Residues Asp1388–Ser1411 show a composition bias toward polar residues.

Binds DNA as a homodimer. Interacts with SRO9 and YDJ1. In the absence of heme, binds to at least four cellular proteins, including YDJ1 and SRO9, forming a high-molecular-weight complex (HMC) which results in repression of its activity and dictates its DNA-binding specificity.

Its subcellular location is the nucleus. Functionally, regulation of oxygen dependent gene expression. It modulates the expression of Iso-1 (CYP1) and Iso-2 (CYP3) cytochrome c. In response to heme, promotes transcription of genes encoding functions required for respiration, controlling oxidative damage and repression of anaerobic genes. Binds to the sequence 5'-CGGNNNTNNCGG-3'. This chain is Heme-responsive zinc finger transcription factor HAP1 (HAP1), found in Saccharomyces cerevisiae (strain JAY291) (Baker's yeast).